The primary structure comprises 413 residues: ATP phosphoribosyltransferase regulatory subunit (413 aa).

A disordered region spans residues 1–21 (MRSRAARKFSTTPGTRDVLPP).

The protein belongs to the class-II aminoacyl-tRNA synthetase family. HisZ subfamily. In terms of assembly, heteromultimer composed of HisG and HisZ subunits.

The protein resides in the cytoplasm. It participates in amino-acid biosynthesis; L-histidine biosynthesis; L-histidine from 5-phospho-alpha-D-ribose 1-diphosphate: step 1/9. Its function is as follows. Required for the first step of histidine biosynthesis. May allow the feedback regulation of ATP phosphoribosyltransferase activity by histidine. The polypeptide is ATP phosphoribosyltransferase regulatory subunit (Rubrobacter xylanophilus (strain DSM 9941 / JCM 11954 / NBRC 16129 / PRD-1)).